A 562-amino-acid chain; its full sequence is Putative transport protein NT01EI_2530 (562 aa).

Transmembrane regions (helical) follow at residues 8–28, 32–52, 66–86, 94–114, 118–138, and 158–178; these read LLTG…LCLG, LGSI…LLGQ, FMLF…SIFF, MLAL…GKLF, IGLT…LVGA, and HLSL…IFGA. 2 RCK C-terminal domains span residues 202–288 and 290–373; these read LDND…SFRN and KEVF…RIGF. Helical transmembrane passes span 383–403, 406–426, 443–463, 477–497, and 541–561; these read LLAF…TFQF, FSFG…LGFL, MVKE…AGAG, IAGL…GAFV, and IANV…PGVV.

Belongs to the AAE transporter (TC 2.A.81) family. YbjL subfamily.

It is found in the cell membrane. The chain is Putative transport protein NT01EI_2530 from Edwardsiella ictaluri (strain 93-146).